Consider the following 229-residue polypeptide: Clathrin light chain B (229 aa).

2 stretches are compositionally biased toward low complexity: residues 1–17 (MAED…GAPE) and 45–58 (GAPA…AQPG). Residues 1–80 (MAEDFGFFSS…TVNGDVFQEA (80 aa)) are disordered. 2 positions are modified to phosphoserine: S11 and S13. Positions 93 to 155 (ADRLTQEPES…QVEKNKINNR (63 aa)) are involved in binding clathrin heavy chain. Phosphothreonine is present on T187. A disulfide bridge connects residues C199 and C209. Position 204 is an N6-acetyllysine (K204). S217 is modified (phosphoserine).

Belongs to the clathrin light chain family. Clathrin coats are formed from molecules containing 3 heavy chains and 3 light chains. Interacts (via N-terminus) with HIP1. Interacts with HIP1R.

It is found in the cytoplasmic vesicle membrane. Its subcellular location is the membrane. The protein resides in the coated pit. Functionally, clathrin is the major protein of the polyhedral coat of coated pits and vesicles. This Rattus norvegicus (Rat) protein is Clathrin light chain B (Cltb).